We begin with the raw amino-acid sequence, 892 residues long: Nitrogen assimilation transcription factor nirA (892 aa).

Residues 1–32 (MGEKLDPELSSDGPHTKSSSKGQGTSTDNAPA) form a disordered region. Low complexity predominate over residues 16 to 27 (TKSSSKGQGTST). The zn(2)-C6 fungal-type DNA-binding region spans 42-70 (CIACRRRKSKCDGNLPSCAACSSVYHTTC). 3 disordered regions span residues 646 to 714 (GPWD…SGPV), 731 to 761 (AHNE…SAQE), and 842 to 892 (PNIP…SFQR). Low complexity predominate over residues 649-674 (DQAASPSTTSDSPPSVSSQSVVATTD). 3 stretches are compositionally biased toward polar residues: residues 675 to 714 (LSQP…SGPV), 746 to 761 (VSTS…SAQE), and 876 to 892 (NVNS…SFQR).

The protein resides in the nucleus. Its function is as follows. Pathway-specific regulatory gene of nitrate assimilation; it activates the transcription of the genes for nitrate and nitrite reductases (niaD and niiA). This chain is Nitrogen assimilation transcription factor nirA (nirA), found in Emericella nidulans (strain FGSC A4 / ATCC 38163 / CBS 112.46 / NRRL 194 / M139) (Aspergillus nidulans).